The primary structure comprises 37 residues: Potassium channel toxin alpha-KTx 11.2 (37 aa).

3 cysteine pairs are disulfide-bonded: Cys-8–Cys-27, Cys-13–Cys-33, and Cys-17–Cys-35.

Belongs to the short scorpion toxin superfamily. Potassium channel inhibitor family. Alpha-KTx 11 subfamily. In terms of tissue distribution, expressed by the venom gland.

The protein localises to the secreted. Functionally, binds and inhibits voltage-sensitive potassium channels. Inhibits the vertebrate potassium channel Kv1.1/KCNA1 with low affinity. This is Potassium channel toxin alpha-KTx 11.2 from Parabuthus villosus (Black hairy thick-tailed scorpion).